We begin with the raw amino-acid sequence, 138 residues long: Large ribosomal subunit protein uL16 (138 aa).

Residues 1–29 (MSLLQPRKVKWRKPQKGRTKGKATRRNQV) are disordered. The span at 7 to 25 (RKVKWRKPQKGRTKGKATR) shows a compositional bias: basic residues.

It belongs to the universal ribosomal protein uL16 family. In terms of assembly, part of the 50S ribosomal subunit.

Functionally, binds 23S rRNA and is also seen to make contacts with the A and possibly P site tRNAs. This is Large ribosomal subunit protein uL16 from Sulfurihydrogenibium sp. (strain YO3AOP1).